The following is a 413-amino-acid chain: L-cysteine:1D-myo-inositol 2-amino-2-deoxy-alpha-D-glucopyranoside ligase (413 aa).

A Zn(2+)-binding site is contributed by cysteine 15. L-cysteinyl-5'-AMP contacts are provided by residues 15–18 (CGIT), threonine 30, and 53–55 (NVT). Residues 17 to 27 (ITPYDATHLGH) carry the 'HIGH' region motif. The short motif at 155–160 (ERGGDP) is the 'ERGGDP' region element. Tryptophan 195 provides a ligand contact to L-cysteinyl-5'-AMP. Cysteine 199 lines the Zn(2+) pocket. 217–219 (GTD) serves as a coordination point for L-cysteinyl-5'-AMP. A Zn(2+)-binding site is contributed by histidine 224. An L-cysteinyl-5'-AMP-binding site is contributed by valine 251. A 'KMSKS' region motif is present at residues 257–261 (KMSKS).

Belongs to the class-I aminoacyl-tRNA synthetase family. MshC subfamily. As to quaternary structure, monomer. Requires Zn(2+) as cofactor.

The enzyme catalyses 1D-myo-inositol 2-amino-2-deoxy-alpha-D-glucopyranoside + L-cysteine + ATP = 1D-myo-inositol 2-(L-cysteinylamino)-2-deoxy-alpha-D-glucopyranoside + AMP + diphosphate + H(+). Functionally, catalyzes the ATP-dependent condensation of GlcN-Ins and L-cysteine to form L-Cys-GlcN-Ins. In Frankia alni (strain DSM 45986 / CECT 9034 / ACN14a), this protein is L-cysteine:1D-myo-inositol 2-amino-2-deoxy-alpha-D-glucopyranoside ligase.